The chain runs to 440 residues: L-gulonolactone oxidase (440 aa).

In terms of domain architecture, FAD-binding PCMH-type spans 17-187; it reads YSCEPELYFE…LNVTIQCVPA (171 aa). Histidine 54 is subject to Pros-8alpha-FAD histidine. A helical membrane pass occupies residues 245–267; that stretch reads WFWNYAIGYYLLEFLLWISVFVP.

It belongs to the oxygen-dependent FAD-linked oxidoreductase family. The cofactor is FAD.

It is found in the microsome membrane. The protein localises to the endoplasmic reticulum membrane. The catalysed reaction is L-gulono-1,4-lactone + O2 = L-ascorbate + H2O2 + H(+). It participates in cofactor biosynthesis; L-ascorbate biosynthesis via UDP-alpha-D-glucuronate pathway; L-ascorbate from UDP-alpha-D-glucuronate: step 4/4. Its function is as follows. Oxidizes L-gulono-1,4-lactone to hydrogen peroxide and L-xylo-hexulonolactone which spontaneously isomerizes to L-ascorbate. The polypeptide is L-gulonolactone oxidase (GULO) (Scyliorhinus torazame (Cloudy catshark)).